Reading from the N-terminus, the 265-residue chain is MQEYTNHSDTTFALRNISFRVPGRTLLHPLSLTFPAGKVTGLIGHNGSGKSTLLKMLGRHQPPSEGEILLDAQPLESWSSKAFARKVAYLPQQLPPAEGMTVRELVAIGRYPWHGALGRFGAADREKVEEAISLVGLKPLAHRLVDSLSGGERQRAWIAMLVAQDSRCLLLDEPTSALDIAHQVDVLSLVHRLSQERGLTVIAVLHDINMAARYCDYLVALRGGEMIAQGTPAEIMRGETLEMIYGIPMGILPHPAGAAPVSFVY.

Residues 12–248 enclose the ABC transporter domain; sequence FALRNISFRV…ETLEMIYGIP (237 aa). ATP contacts are provided by residues 44 to 51 and 168 to 179; these read GHNGSGKS and CLLLDEPTSALD.

This sequence belongs to the ABC transporter superfamily. Iron (Fe3+)-hydroxamate importer (TC 3.A.1.14.7) family. In terms of assembly, the complex is composed of two ATP-binding proteins (FhuC), a transmembrane protein (FhuB) and a solute-binding protein (FhuD). FhuC interacts with FhuB.

The protein resides in the cell inner membrane. It catalyses the reaction ATP + H2O + Fe(3+)-hydroxamate complex-[hydroxamate-binding protein]Side 1 = ADP + phosphate + Fe(3+)-hydroxamate complexSide 2 + [hydroxamate-binding protein]Side 1.. ATPase activity is inhibited by vanadate. Functionally, part of the ABC transporter complex FhuCDB involved in iron(3+)-hydroxamate import. Responsible for energy coupling to the transport system. This Escherichia coli (strain K12) protein is Iron(3+)-hydroxamate import ATP-binding protein FhuC (fhuC).